We begin with the raw amino-acid sequence, 370 residues long: tRNA (guanine(26)-N(2))-dimethyltransferase (370 aa).

The Trm1 methyltransferase domain maps to 4-368 (TWVTEGRTTI…APLEEIRDCI (365 aa)). S-adenosyl-L-methionine contacts are provided by R41, R66, D82, D108, and A109. The Zn(2+) site is built by C237, C240, C256, and C259.

The protein belongs to the class I-like SAM-binding methyltransferase superfamily. Trm1 family.

It catalyses the reaction guanosine(26) in tRNA + 2 S-adenosyl-L-methionine = N(2)-dimethylguanosine(26) in tRNA + 2 S-adenosyl-L-homocysteine + 2 H(+). Its function is as follows. Dimethylates a single guanine residue at position 26 of a number of tRNAs using S-adenosyl-L-methionine as donor of the methyl groups. The chain is tRNA (guanine(26)-N(2))-dimethyltransferase from Methanospirillum hungatei JF-1 (strain ATCC 27890 / DSM 864 / NBRC 100397 / JF-1).